A 230-amino-acid chain; its full sequence is N-(5'-phosphoribosyl)anthranilate isomerase (230 aa).

This sequence belongs to the TrpF family.

It catalyses the reaction N-(5-phospho-beta-D-ribosyl)anthranilate = 1-(2-carboxyphenylamino)-1-deoxy-D-ribulose 5-phosphate. Its pathway is amino-acid biosynthesis; L-tryptophan biosynthesis; L-tryptophan from chorismate: step 3/5. This is N-(5'-phosphoribosyl)anthranilate isomerase from Trichodesmium erythraeum (strain IMS101).